We begin with the raw amino-acid sequence, 241 residues long: Golgi-associated RAB2 interactor protein 6 (241 aa).

Belongs to the GARIN family.

The polypeptide is Golgi-associated RAB2 interactor protein 6 (Homo sapiens (Human)).